The chain runs to 144 residues: MRDVNCVGIVMGFDFGTKHIGVAIGQKLTCTAQPLTVLQSQSGVPNWKRIRDIYNTWKPMIFVVGLPLKIDGSEQPITILAKIFAIQLKELFPVPVKMHDERFSTSEARLNYFKYYHDDLCARSNIKINAIAAGVILKSWLNKS.

It belongs to the YqgF nuclease family.

It localises to the cytoplasm. In terms of biological role, could be a nuclease involved in processing of the 5'-end of pre-16S rRNA. In Blochmanniella pennsylvanica (strain BPEN), this protein is Putative pre-16S rRNA nuclease.